Consider the following 1033-residue polypeptide: E3 ubiquitin-protein ligase Topors (1033 aa).

Residues 1-10 (MGSQPPPPGS) show a composition bias toward pro residues. Residues 1-36 (MGSQPPPPGSPLSREEGEAPPLVPAEEGRRRSRRVR) are disordered. The tract at residues 52 to 376 (ELASNGPAVP…MAAFDQHANY (325 aa)) is required for DNA-binding. Glycyl lysine isopeptide (Lys-Gly) (interchain with G-Cter in SUMO2) cross-links involve residues Lys74, Lys77, Lys84, and Lys89. Ser99 is subject to Phosphoserine. The segment at 104–143 (CPICLDRFDNVSYLDRCLHKFCFRCVQEWSKNKAECPLCK) adopts an RING-type zinc-finger fold. Lys160 is covalently cross-linked (Glycyl lysine isopeptide (Lys-Gly) (interchain with G-Cter in SUMO2)). Ser196 bears the Phosphoserine mark. Residue Lys251 forms a Glycyl lysine isopeptide (Lys-Gly) (interchain with G-Cter in SUMO2) linkage. Disordered stretches follow at residues 414–477 (QAPW…SSSD) and 496–692 (VELS…RYYL). Over residues 434–444 (VGVSSLLNSSD) the composition is skewed to low complexity. The sumoylation and localization to discrete nuclear foci stretch occupies residues 438–574 (SLLNSSDSSD…RSTSLPAPRD (137 aa)). The interaction with SUMO1 stretch occupies residues 438–654 (SLLNSSDSSD…RSRTRDSSWS (217 aa)). The span at 455–464 (TTSQIQGVQT) shows a compositional bias: polar residues. An interaction with p53/TP53 region spans residues 457–731 (SQIQGVQTND…RRTLSRAHYS (275 aa)). The interval 457–879 (SQIQGVQTND…GKATDTSKHH (423 aa)) is interaction with TOP1. A compositionally biased stretch (low complexity) spans 465–477 (NDDVNNDSDSSSD). Position 500 is a phosphoserine (Ser500). Residues 507–518 (PYEKVETVKTQE) are compositionally biased toward basic and acidic residues. Residues 522–535 (SYSSGDSDVSRASS) show a composition bias toward low complexity. Residues 540–566 (LGKDEQMSKSHCDSDTRISSKKEEKRS) are compositionally biased toward basic and acidic residues. Lys561 is covalently cross-linked (Glycyl lysine isopeptide (Lys-Gly) (interchain with G-Cter in SUMO)). Ser585 bears the Phosphoserine mark. Basic residues-rich tracts occupy residues 613–629 (RNHR…KRSR) and 637–647 (PRARKDKKRSR). Residues 654-669 (SRRSQTLSLSSGSTSR) show a composition bias toward low complexity. Lys701 is covalently cross-linked (Glycyl lysine isopeptide (Lys-Gly) (interchain with G-Cter in SUMO2)). 2 disordered regions span residues 713 to 934 (RDGY…PIQD) and 970 to 1033 (TVEN…CDVS). The residue at position 718 (Ser718) is a Phosphoserine; by PLK1. Residues 721 to 730 (RRRTLSRAHY) show a composition bias toward basic residues. Polar residues predominate over residues 731-747 (SRQSSSPEFRIQSFSER). Ser734 carries the phosphoserine modification. The span at 770-780 (SVSSNRSRTTS) shows a compositional bias: low complexity. A compositionally biased stretch (basic and acidic residues) spans 815–837 (FTSKGKDSHYQKSKLDGSYKNES). Glycyl lysine isopeptide (Lys-Gly) (interchain with G-Cter in SUMO2) cross-links involve residues Lys818 and Lys834. Basic residues predominate over residues 851-860 (KHKRRRRRTR). An interaction with UBE2I region spans residues 851–914 (KHKRRRRRTR…ITIDSDSDGE (64 aa)). 2 positions are modified to phosphoserine: Ser861 and Ser863. Over residues 877–894 (KHHKKKKKKHKKKHKKHH) the composition is skewed to basic residues. Phosphoserine is present on residues Ser909, Ser911, Ser999, Ser1016, and Ser1025. Polar residues predominate over residues 992–1008 (TFASDLESQSSNVSIQA).

Interacts with TOP1. Interacts with the SUMO1 conjugating enzyme UBE2I. Interacts with SUMO1. Interacts with NKX3-1; polyubiquitinates NKX3-1 and induces its proteasomal degradation. Interacts with SIN3A; sumoylates SIN3A. Interacts with IKBKE; induced by DNA damage. Interacts with p53/TP53. Interacts with PARK7/DJ-1. Post-translationally, phosphorylation at Ser-99 regulates the E3 ubiquitin-protein ligase activity but not the SUMO1-protein ligase activity. Phosphorylation at Ser-718 increases the E3 ubiquitin-protein ligase activity versus the E3 SUMO1-protein ligase activity resulting in increased p53/TP53 ubiquitination and degradation. Sumoylated.

The protein localises to the nucleus. It is found in the PML body. It carries out the reaction S-ubiquitinyl-[E2 ubiquitin-conjugating enzyme]-L-cysteine + [acceptor protein]-L-lysine = [E2 ubiquitin-conjugating enzyme]-L-cysteine + N(6)-ubiquitinyl-[acceptor protein]-L-lysine.. Its function is as follows. Functions as an E3 ubiquitin-protein ligase and as a E3 SUMO1-protein ligase. Probable tumor suppressor involved in cell growth, cell proliferation and apoptosis that regulates p53/TP53 stability through ubiquitin-dependent degradation. May regulate chromatin modification through sumoylation of several chromatin modification-associated proteins. May be involved in DNA-damage-induced cell death through IKBKE sumoylation. This is E3 ubiquitin-protein ligase Topors (Topors) from Mus musculus (Mouse).